Consider the following 144-residue polypeptide: 3-hydroxyacyl-[acyl-carrier-protein] dehydratase FabZ (144 aa).

His-51 is a catalytic residue.

This sequence belongs to the thioester dehydratase family. FabZ subfamily.

Its subcellular location is the cytoplasm. The enzyme catalyses a (3R)-hydroxyacyl-[ACP] = a (2E)-enoyl-[ACP] + H2O. Functionally, involved in unsaturated fatty acids biosynthesis. Catalyzes the dehydration of short chain beta-hydroxyacyl-ACPs and long chain saturated and unsaturated beta-hydroxyacyl-ACPs. The chain is 3-hydroxyacyl-[acyl-carrier-protein] dehydratase FabZ from Clostridium botulinum (strain ATCC 19397 / Type A).